Consider the following 375-residue polypeptide: MAKASVVVPEQVGAAAAAQVGCPCPGTTLFPYPPPRAGIAVRRKCLQAAQQLELGAGLRGGWVESMRASSPTHAKAAAALAAGVDEEHAAWMARHPSALGEFEKVVAASKGKQIVMFLDYDGTLSPIVDDPDAAFMSETMRMAVRSVAKHFPTAIVSGRCRDKVFEFVKLAELYYAGSHGMDIKGPASRHAAAKSPPHNKGVLFQPASEFLPMIEQVHQRLEQATSSIPGAKVENNKFCVSVHFRCVDEKSWGALAETVRRVVREFPRLRLSQGRMVFEVRPTIKWDKGKALEFLLDSLGFADCSDVLPVYIGDDRTDEDAFKVLRRRGQGVGILVSKHPKETSASFSLQEPAEVMEFLLRLVEWNRLSRTRLRL.

It belongs to the trehalose phosphatase family. A divalent metal cation is required as a cofactor.

The catalysed reaction is alpha,alpha-trehalose 6-phosphate + H2O = alpha,alpha-trehalose + phosphate. It participates in glycan biosynthesis; trehalose biosynthesis. In terms of biological role, removes the phosphate from trehalose 6-phosphate to produce free trehalose. Trehalose accumulation in plant may improve abiotic stress tolerance. In Oryza sativa subsp. japonica (Rice), this protein is Probable trehalose-phosphate phosphatase 7 (TPP7).